The following is a 598-amino-acid chain: DNA polymerase alpha subunit B (598 aa).

Residues 112-140 show a composition bias toward polar residues; it reads SYTTPSKGSQKRAISTPETPLTKRSVSTR. The interval 112 to 167 is disordered; the sequence is SYTTPSKGSQKRAISTPETPLTKRSVSTRSPHQLLSPSSFSPSATPSQKYNSRSNR. At Ser-126 the chain carries Phosphoserine. Phosphothreonine is present on residues Thr-127 and Thr-130. 4 positions are modified to phosphoserine: Ser-141, Ser-147, Ser-152, and Ser-154. The span at 141 to 158 shows a compositional bias: low complexity; it reads SPHQLLSPSSFSPSATPS.

It belongs to the DNA polymerase alpha subunit B family. In terms of assembly, component of the alpha DNA polymerase complex (also known as the alpha DNA polymerase-primase complex) consisting of four subunits: the catalytic subunit POLA1, the regulatory subunit POLA2, and primase complex subunits PRIM1 and PRIM2 respectively. Within the complex, POLA1 directly interacts with PRIM2/p58. Post-translationally, phosphorylated in a cell cycle-dependent manner, in G2/M phase.

The protein resides in the nucleus. Accessory subunit of the DNA polymerase alpha complex (also known as the alpha DNA polymerase-primase complex) which plays an essential role in the initiation of DNA synthesis. During the S phase of the cell cycle, the DNA polymerase alpha complex (composed of a catalytic subunit POLA1, an accessory subunit POLA2 and two primase subunits, the catalytic subunit PRIM1 and the regulatory subunit PRIM2) is recruited to DNA at the replicative forks via direct interactions with MCM10 and WDHD1. The primase subunit of the polymerase alpha complex initiates DNA synthesis by oligomerising short RNA primers on both leading and lagging strands. These primers are initially extended by the polymerase alpha catalytic subunit and subsequently transferred to polymerase delta and polymerase epsilon for processive synthesis on the lagging and leading strand, respectively. This Homo sapiens (Human) protein is DNA polymerase alpha subunit B (POLA2).